The sequence spans 368 residues: Meiotic driver wtf23 (368 aa).

The disordered stretch occupies residues 1–98 (MKNKYYPLRS…SSGTADNSST (98 aa)). A compositionally biased stretch (basic and acidic residues) spans 11–29 (SMDELSAKNDNEIDLEKGP). 2 stretches are compositionally biased toward polar residues: residues 57 to 72 (GANN…STTP) and 89 to 98 (SSGTADNSST). A run of 7 helical transmembrane segments spans residues 105–124 (FLSF…YLTY), 139–158 (YFGV…WYFY), 170–192 (IFLA…VISI), 202–221 (MIII…GCVK), 234–256 (STCT…FWTF), 266–283 (VFLL…TMFL), and 328–350 (GIAF…FRGG).

It belongs to the WTF family. Homomer. Forms protein aggregates. The two isoforms can interact with each other and with themselves. High sequence similarity is required for their interaction.

It is found in the spore membrane. Its subcellular location is the vacuole membrane. The protein localises to the ascus epiplasm. It localises to the cytoplasm. The protein resides in the endoplasmic reticulum membrane. In terms of biological role, promotes unequal transmission of alleles from the parental zygote to progeny spores by acting as poison/antidote system where the poison and antidote proteins are produced from the same locus; the poison component is trans-acting and targets all spores within an ascus whereas the antidote component is spore-specific, leading to poisoning of all progeny that do not inherit the allele. Functionally, localizes isoform 2 to the vacuole thereby facilitating its degradation. Its function is as follows. Forms toxic aggregates that disrupt spore maturation. This chain is Meiotic driver wtf23, found in Schizosaccharomyces pombe (strain 972 / ATCC 24843) (Fission yeast).